Here is a 188-residue protein sequence, read N- to C-terminus: MKVIASSLRKGNVVEKDGRLYVILSAENIHPGKGTPVTQLDMRRITDGVKVSERYRTTEQVERAFVEDREHTFLYKDGEGSHFMNPESYEQVAVPDDVIGDQAAYLQEGMAVMLSLHNGVPLAIELPQRVTLEIVETEPVTKGQTASSSYKPAVLSNGVRTLVPPHITTGTRVVIMTADGSYVERAKD.

It belongs to the elongation factor P family.

The protein resides in the cytoplasm. The protein operates within protein biosynthesis; polypeptide chain elongation. In terms of biological role, involved in peptide bond synthesis. Stimulates efficient translation and peptide-bond synthesis on native or reconstituted 70S ribosomes in vitro. Probably functions indirectly by altering the affinity of the ribosome for aminoacyl-tRNA, thus increasing their reactivity as acceptors for peptidyl transferase. In Methylobacterium sp. (strain 4-46), this protein is Elongation factor P.